The primary structure comprises 106 residues: Large ribosomal subunit protein uL24 (106 aa).

It belongs to the universal ribosomal protein uL24 family. Part of the 50S ribosomal subunit.

In terms of biological role, one of two assembly initiator proteins, it binds directly to the 5'-end of the 23S rRNA, where it nucleates assembly of the 50S subunit. Functionally, one of the proteins that surrounds the polypeptide exit tunnel on the outside of the subunit. The sequence is that of Large ribosomal subunit protein uL24 from Dechloromonas aromatica (strain RCB).